We begin with the raw amino-acid sequence, 394 residues long: Cytohesin-4 (394 aa).

The stretch at 12–65 forms a coiled coil; it reads SSGETEELQRIKWHRKQLLEDIQKLKDEIADVFAQIDCFESAEESRMAQKEKEL. The region spanning 54–241 is the SEC7 domain; the sequence is EESRMAQKEK…RNLFDSIKSE (188 aa). The region spanning 259–375 is the PH domain; sequence NPDREGWLLK…WIESIRASIT (117 aa). Residues 268–275, Arg-279, Tyr-290, and Arg-300 each bind a 1,2-diacyl-sn-glycero-3-phospho-(1D-myo-inositol-3,4,5-trisphosphate); that span reads KLGGRVKT. Residues 386-394 form a C-terminal autoinhibitory region region; the sequence is RKKKIASKQ.

In terms of tissue distribution, expressed predominantly in peripheral blood leukocytes.

The protein resides in the cell membrane. In terms of biological role, promotes guanine-nucleotide exchange on ARF1 and ARF5. Promotes the activation of ARF factors through replacement of GDP with GTP. This chain is Cytohesin-4 (CYTH4), found in Homo sapiens (Human).